Consider the following 168-residue polypeptide: Protein-export protein SecB (168 aa).

Belongs to the SecB family. Homotetramer, a dimer of dimers. One homotetramer interacts with 1 SecA dimer.

Its subcellular location is the cytoplasm. Functionally, one of the proteins required for the normal export of preproteins out of the cell cytoplasm. It is a molecular chaperone that binds to a subset of precursor proteins, maintaining them in a translocation-competent state. It also specifically binds to its receptor SecA. The protein is Protein-export protein SecB of Thioalkalivibrio sulfidiphilus (strain HL-EbGR7).